Here is a 156-residue protein sequence, read N- to C-terminus: Small ribosomal subunit protein uS7 (156 aa).

Belongs to the universal ribosomal protein uS7 family. As to quaternary structure, part of the 30S ribosomal subunit. Contacts proteins S9 and S11.

One of the primary rRNA binding proteins, it binds directly to 16S rRNA where it nucleates assembly of the head domain of the 30S subunit. Is located at the subunit interface close to the decoding center, probably blocks exit of the E-site tRNA. The polypeptide is Small ribosomal subunit protein uS7 (Cronobacter sakazakii (strain ATCC BAA-894) (Enterobacter sakazakii)).